The primary structure comprises 703 residues: uncharacterized protein (703 aa).

Residues 1-23 (MKQIMIFLTSFMLLAMTGQTALA) form the signal peptide. A helical membrane pass occupies residues 673-693 (MYIGVLALIMVVAAVFIWIAV).

The protein localises to the cell membrane. This is an uncharacterized protein from Bacillus subtilis (strain 168).